The following is a 607-amino-acid chain: Thymidine kinase (607 aa).

Disordered regions lie at residues 1–160 (MAGF…ADST) and 180–215 (DDKS…PSGL). Over residues 17-32 (KCQEDESPENERHENF) the composition is skewed to basic and acidic residues. Polar residues-rich tracts occupy residues 88–106 (AAVT…TSCP), 148–160 (RKTS…ADST), and 194–203 (RRPSSHSALK). Residue 291-298 (GAPGVGKT) participates in ATP binding. Glutamate 317 functions as the Proton acceptor in the catalytic mechanism. Glutamine 355 contacts substrate. Position 445 (arginine 445) interacts with ATP. Position 451 (arginine 451) interacts with substrate.

This sequence belongs to the herpesviridae thymidine kinase family. In terms of assembly, homodimer.

It is found in the virion tegument. The protein localises to the host nucleus. It catalyses the reaction thymidine + ATP = dTMP + ADP + H(+). Its function is as follows. Catalyzes the transfer of the gamma-phospho group of ATP to thymidine to generate dTMP in the salvage pathway of pyrimidine synthesis. The dTMP serves as a substrate for DNA polymerase during viral DNA replication. Allows the virus to be reactivated and to grow in non-proliferative cells lacking a high concentration of phosphorylated nucleic acid precursors. This is Thymidine kinase from Epstein-Barr virus (strain GD1) (HHV-4).